The chain runs to 338 residues: m7GpppX diphosphatase (338 aa).

A disordered region spans residues 1–36; that stretch reads MADTAPQLKRKREQEAEEAETPSTEEKEAGVGNGTS. N-acetylalanine is present on Ala2. Positions 9-12 match the nuclear localization signal (NLS) motif; the sequence is KRKR. Phosphoserine occurs at positions 23 and 100. Residues Lys137 and Lys141 each carry the N6-acetyllysine modification. The nuclear export sequence (NES) signature appears at 141-153; sequence KYMRQDLRLIRET. Residues Trp174, Glu184, Asp204, Lys206, and 267 to 278 contribute to the substrate site; that span reads HYLPSYYHLHVH. Residues 274–278 carry the Histidine triad motif motif; it reads HLHVH. The active-site Nucleophile is the His276.

Belongs to the HIT family. As to quaternary structure, homodimer. Associates with components of the exosome multienzyme ribonuclease complex, such as EXOSC3 and EXOSC4. Interacts with NDOR1.

The protein localises to the cytoplasm. It is found in the nucleus. It carries out the reaction a 5'-end (N(7)-methyl 5'-triphosphoguanosine)-ribonucleoside in mRNA + H2O = N(7)-methyl-GMP + a 5'-end diphospho-ribonucleoside in mRNA + 2 H(+). The hydrolytic product 7-methylguanosine diphosphate (m7GDP) efficiently inhibits the decapping scavenger activity and acts as a competitive inhibitor in vitro. Inhibited by 2,4-diaminoquinazoline. Functionally, decapping scavenger enzyme that catalyzes the cleavage of a residual cap structure following the degradation of mRNAs by the 3'-&gt;5' exosome-mediated mRNA decay pathway. Hydrolyzes cap analog structures like 7-methylguanosine nucleoside triphosphate (m7GpppG) with up to 10 nucleotide substrates (small capped oligoribonucleotides) and specifically releases 5'-phosphorylated RNA fragments and 7-methylguanosine monophosphate (m7GMP). Cleaves cap analog structures like tri-methyl guanosine nucleoside triphosphate (m3(2,2,7)GpppG) with very poor efficiency. Does not hydrolyze unmethylated cap analog (GpppG) and shows no decapping activity on intact m7GpppG-capped mRNA molecules longer than 25 nucleotides. Does not hydrolyze 7-methylguanosine diphosphate (m7GDP) to m7GMP. May also play a role in the 5'-&gt;3 mRNA decay pathway; m7GDP, the downstream product released by the 5'-&gt;3' mRNA mediated decapping activity, may be also converted by DCPS to m7GMP. Binds to m7GpppG and strongly to m7GDP. Plays a role in first intron splicing of pre-mRNAs. Inhibits activation-induced cell death. The chain is m7GpppX diphosphatase (Dcps) from Mus musculus (Mouse).